Here is a 434-residue protein sequence, read N- to C-terminus: uncharacterized protein (434 aa).

N6-(pyridoxal phosphate)lysine is present on lysine 216.

This is an uncharacterized protein from Schizosaccharomyces pombe (strain 972 / ATCC 24843) (Fission yeast).